The following is a 128-amino-acid chain: Glycine cleavage system H protein (128 aa).

Residues Ala22–Glu104 form the Lipoyl-binding domain. Lys63 carries the post-translational modification N6-lipoyllysine.

It belongs to the GcvH family. In terms of assembly, the glycine cleavage system is composed of four proteins: P, T, L and H. (R)-lipoate serves as cofactor.

Functionally, the glycine cleavage system catalyzes the degradation of glycine. The H protein shuttles the methylamine group of glycine from the P protein to the T protein. This chain is Glycine cleavage system H protein, found in Anaeromyxobacter dehalogenans (strain 2CP-1 / ATCC BAA-258).